The following is a 354-amino-acid chain: Rhodopsin (354 aa).

Over 1-36 the chain is Extracellular; that stretch reads MNGTEGPYFNVPMVNTTGIVRSPYEYPQYYLVSPAA. N-linked (GlcNAc...) asparagine glycans are attached at residues asparagine 2 and asparagine 15. A helical membrane pass occupies residues 37-61; it reads YAALGAYMFFLILVGFPINFLTLYV. Topologically, residues 62–73 are cytoplasmic; sequence TLEHKKLRTPLN. Residues 74 to 96 traverse the membrane as a helical segment; it reads YILLNLAVADLFMVFGGFTTTMY. Residues 97 to 110 lie on the Extracellular side of the membrane; it reads TSMHGYFVLGRLGC. Cysteine 110 and cysteine 187 form a disulfide bridge. Residues 111-133 traverse the membrane as a helical segment; sequence NLEGFFATLGGEIGLWSLVVLAI. Residues 134-136 carry the 'Ionic lock' involved in activated form stabilization motif; it reads ERW. Residues 134–152 lie on the Cytoplasmic side of the membrane; that stretch reads ERWVVVCKPISNFRFGENH. The chain crosses the membrane as a helical span at residues 153 to 173; the sequence is AIMGLVFTWIMAASCAVPPLV. Residues 174-202 lie on the Extracellular side of the membrane; it reads GWSRYIPEGMQCSCGVDYYTRAEGFNNES. Residues 203 to 224 traverse the membrane as a helical segment; it reads FVVYMFVCHFLIPLIVVFFCYG. Over 225–252 the chain is Cytoplasmic; the sequence is RLLCAVKEAAAAQQESETTQRAEREVTR. The helical transmembrane segment at 253–274 threads the bilayer; it reads MVVIMVIGFLVCWLPYASVAWY. Over 275-286 the chain is Extracellular; sequence IFTNQGSEFGPL. Residues 287–308 form a helical membrane-spanning segment; it reads FMTIPAFFAKSSSIYNPAIYIC. N6-(retinylidene)lysine is present on lysine 296. Residues 309-354 are Cytoplasmic-facing; sequence MNKQFRNCMITTLCCGKNPFEEEEGASTTASKTEASSVSSSSVSPA. 2 S-palmitoyl cysteine lipidation sites follow: cysteine 322 and cysteine 323. Residues 332-354 form a disordered region; the sequence is EGASTTASKTEASSVSSSSVSPA. Residues 334 to 354 show a composition bias toward low complexity; that stretch reads ASTTASKTEASSVSSSSVSPA.

Belongs to the G-protein coupled receptor 1 family. Opsin subfamily. In terms of processing, phosphorylated on some or all of the serine and threonine residues present in the C-terminal region. Contains one covalently linked retinal chromophore.

It is found in the membrane. It localises to the cell projection. The protein resides in the cilium. Its subcellular location is the photoreceptor outer segment. Its function is as follows. Photoreceptor required for image-forming vision at low light intensity. While most salt water fish species use retinal as chromophore, most freshwater fish use 3-dehydroretinal, or a mixture of retinal and 3-dehydroretinal. Light-induced isomerization of 11-cis to all-trans retinal triggers a conformational change that activates signaling via G-proteins. Subsequent receptor phosphorylation mediates displacement of the bound G-protein alpha subunit by arrestin and terminates signaling. The polypeptide is Rhodopsin (rho) (Oryzias latipes (Japanese rice fish)).